Consider the following 336-residue polypeptide: Transmembrane protease serine 12 (336 aa).

The signal sequence occupies residues 1 to 18 (MASWALSAALLCLGGAFA). At 19–312 (YSELHSLSLR…HYLSQGNINR (294 aa)) the chain is on the extracellular side. The 241-residue stretch at 66 to 306 (IIGGSQADTG…FQEWMTHYLS (241 aa)) folds into the Peptidase S1 domain. Cysteines 95 and 111 form a disulfide. Active-site charge relay system residues include His-110 and Asp-159. 3 disulfides stabilise this stretch: Cys-194-Cys-262, Cys-225-Cys-241, and Cys-252-Cys-282. N-linked (GlcNAc...) asparagine glycosylation is found at Asn-207, Asn-237, and Asn-246. Ser-256 (charge relay system) is an active-site residue. The chain crosses the membrane as a helical span at residues 313-333 (LFNMDIVLGQVLTALGSVILL). Over 334–336 (GVT) the chain is Cytoplasmic.

Belongs to the peptidase S1 family. In terms of tissue distribution, exclusively expressed in the testis, from spermatocytes to elongated spermatids (at protein level).

It localises to the cell membrane. The protein localises to the cytoplasmic vesicle. It is found in the secretory vesicle. Its subcellular location is the acrosome. Functionally, required for male fertility. Plays a critical role in sperm capacitation and acrosome reactions during fertilization, and also plays a role in the regulation of proteins involved in spermatogenesis. Regulates protein pathways that promote chromosomal synapsis formation, double-strand break repair, formation of the inner mitochondrial membrane cristae and apoptosis in developing sperm. Required for normal sperm motility and binding to the zona pellucida, potentially via a role in ADAM3 protein maturation. The sequence is that of Transmembrane protease serine 12 from Mus musculus (Mouse).